A 701-amino-acid polypeptide reads, in one-letter code: Polyphosphate kinase (701 aa).

Asparagine 45 is an ATP binding site. Mg(2+)-binding residues include arginine 373 and arginine 403. Residues 428 to 462 enclose the PLD phosphodiesterase 1 domain; that stretch reads PGMKIHAKLLLITRKEGDEFVRYAHIGTGNFHERT. Histidine 433 functions as the Phosphohistidine intermediate in the catalytic mechanism. ATP contacts are provided by tyrosine 466, arginine 562, and histidine 590. Residues 585–615 enclose the PLD phosphodiesterase 2 domain; it reads DRFLEHPRVLVVHNDGNPQVFISSADWMERN.

This sequence belongs to the polyphosphate kinase 1 (PPK1) family. Mg(2+) serves as cofactor. In terms of processing, an intermediate of this reaction is the autophosphorylated ppk in which a phosphate is covalently linked to a histidine residue through a N-P bond.

The enzyme catalyses [phosphate](n) + ATP = [phosphate](n+1) + ADP. Catalyzes the reversible transfer of the terminal phosphate of ATP to form a long-chain polyphosphate (polyP). This Vibrio cholerae serotype O1 (strain ATCC 39315 / El Tor Inaba N16961) protein is Polyphosphate kinase.